Here is a 192-residue protein sequence, read N- to C-terminus: MASSCPGTPSPAGLPPPSVATPGETLGPAAPPEPAFPDIYGGDAQLWEAHFRGIGRAYRALGKQDDFAIRVLTENFTLPFPFAWPPGSDPACGPLFYDPRDRADFDFLLRGPGASPPALLRPLHATAQAAMRKRRLERLALSCARARGPGPASSCCCPAPPPPSRSPRPALPATAPPGWPRPRRCPESEQNK.

Disordered regions lie at residues 1–37 and 146–192; these read MASS…PAFP and ARGP…EQNK. 2 stretches are compositionally biased toward pro residues: residues 8–19 and 159–180; these read TPSPAGLPPPSV and APPP…PGWP.

This is an uncharacterized protein from Homo sapiens (Human).